The chain runs to 91 residues: Early E3B 10.4 kDa protein (91 aa).

The N-terminal stretch at 1–22 (MIPRVLILLTLVALFCACSTLA) is a signal peptide. Over 23 to 34 (AVAHIEVDCIPP) the chain is Lumenal. A helical membrane pass occupies residues 35–60 (FTVYLLYGFVTLILICSLVTVVIAFI). Residues 61-91 (QFIDWICVRIAYLRHHPQYRDRTIADLLRIL) lie on the Cytoplasmic side of the membrane.

Belongs to the adenoviridae E3B family.

Its subcellular location is the host endoplasmic reticulum membrane. Down-regulates the EGF receptor. This is Early E3B 10.4 kDa protein from Homo sapiens (Human).